The chain runs to 253 residues: Triosephosphate isomerase (253 aa).

9 to 11 (NWK) is a binding site for substrate. Catalysis depends on histidine 97, which acts as the Electrophile. The active-site Proton acceptor is glutamate 169. Residues glycine 175, serine 215, and 236–237 (GG) each bind substrate.

This sequence belongs to the triosephosphate isomerase family. In terms of assembly, homodimer.

It is found in the cytoplasm. It carries out the reaction D-glyceraldehyde 3-phosphate = dihydroxyacetone phosphate. It functions in the pathway carbohydrate biosynthesis; gluconeogenesis. It participates in carbohydrate degradation; glycolysis; D-glyceraldehyde 3-phosphate from glycerone phosphate: step 1/1. Functionally, involved in the gluconeogenesis. Catalyzes stereospecifically the conversion of dihydroxyacetone phosphate (DHAP) to D-glyceraldehyde-3-phosphate (G3P). The chain is Triosephosphate isomerase from Staphylococcus aureus (strain NCTC 8325 / PS 47).